The sequence spans 209 residues: Uracil phosphoribosyltransferase (209 aa).

5-phospho-alpha-D-ribose 1-diphosphate contacts are provided by residues Arg-79, Arg-104, and 131 to 139 (DPMLATGNS). Uracil is bound by residues Ile-194 and 199–201 (GDA). Residue Asp-200 coordinates 5-phospho-alpha-D-ribose 1-diphosphate.

It belongs to the UPRTase family. Mg(2+) serves as cofactor.

It catalyses the reaction UMP + diphosphate = 5-phospho-alpha-D-ribose 1-diphosphate + uracil. It functions in the pathway pyrimidine metabolism; UMP biosynthesis via salvage pathway; UMP from uracil: step 1/1. With respect to regulation, allosterically activated by GTP. In terms of biological role, catalyzes the conversion of uracil and 5-phospho-alpha-D-ribose 1-diphosphate (PRPP) to UMP and diphosphate. The chain is Uracil phosphoribosyltransferase from Agrobacterium fabrum (strain C58 / ATCC 33970) (Agrobacterium tumefaciens (strain C58)).